The chain runs to 661 residues: CD180 antigen (661 aa).

The first 20 residues, 1-20 (MAPDISCFFLVALFLASCRA), serve as a signal peptide directing secretion. The Extracellular portion of the chain corresponds to 21–626 (TTSSDQKCIE…RLSDVTLSCS (606 aa)). The 21-residue stretch at 33–53 (VNKTYNCENLGLNEIPGTLPN) folds into the LRRNT domain. N-linked (GlcNAc...) asparagine glycosylation is found at Asn-34, Asn-53, Asn-70, and Asn-78. LRR repeat units lie at residues 54-75 (STECLEFSFNVLPTIQNTTFSR), 78-99 (NLTFLDLTRCQIYWIHEDTFQS), 102-123 (RLDTLVLTANPLIFMAETALSG), 126-147 (ALKHLFFIQTGISSIDFIPLHN), 150-171 (TLESLYLGSNHISSIKLPKGFP), 174-195 (KLKVLDFQNNAIHYLSKEDMSS), and 201-221 (NLSLNLNGNDIAGIELGAFDS). Asn-201, Asn-244, and Asn-288 each carry an N-linked (GlcNAc...) asparagine glycan. LRR repeat units follow at residues 275-296 (SVESINLQKHYFFNISSNTFHC), 299-321 (GLQELDLTATHLSELPSGLVGLS), 322-343 (TLKKLVLSANKFENLCQISASN), 346-366 (SLTHLSIKGNTKRLELGTGCL), and 371-391 (NLRELDLSHDDIETSDCCNLQ). Residues Asn-394 and Asn-402 are each glycosylated (N-linked (GlcNAc...) asparagine). LRR repeat units lie at residues 397 to 418 (HLQSLNLSYNEPLSLKTEAFKE), 421 to 442 (QLELLDLAFTRLKVKDAQSPFQ), 446 to 466 (LLKVLNLSHSLLDISSEQLFD), 470 to 493 (ALQHLNLQGNHFPKGNIQKTNSLQ), 497 to 518 (RLEILVLSFCDLSSIDQHAFTS), 521 to 544 (MMNHVDLSHNRLTSSSIEALSHLK), and 546 to 566 (IYLNLASNRISIILPSLLPIL). The N-linked (GlcNAc...) asparagine glycan is linked to Asn-451. The 51-residue stretch at 577–627 (NPLDCTCSNIYFLEWYKENMQKLEDTEDTLCENPPLLRGVRLSDVTLSCSM) folds into the LRRCT domain. Residues 627-650 (MAAVGIFFLIVFLLVFAILLIFAV) traverse the membrane as a helical segment. At 651–661 (KYFLRWKYQHI) the chain is on the cytoplasmic side.

This sequence belongs to the Toll-like receptor family. M-shaped tetramer of two CD180-LY86 heterodimers. As to expression, B-lymphocytes and spleen. Not detected in thymus, kidney, muscle, heart, brain or liver.

The protein localises to the cell membrane. Its function is as follows. May cooperate with MD-1 and TLR4 to mediate the innate immune response to bacterial lipopolysaccharide (LPS) in B-cells. Leads to NF-kappa-B activation. Also involved in the life/death decision of B-cells. The chain is CD180 antigen (Cd180) from Mus musculus (Mouse).